We begin with the raw amino-acid sequence, 402 residues long: E3 ubiquitin-protein ligase MARCHF11 (402 aa).

A compositionally biased stretch (gly residues) spans M1–R11. Residues M1–H161 are disordered. The span at E21–P56 shows a compositional bias: pro residues. Low complexity predominate over residues E111–A124. The RING-CH-type zinc finger occupies Q162 to I222. Residues C170, C173, C186, C188, H196, C199, C212, and C215 each contribute to the Zn(2+) site. Transmembrane regions (helical) follow at residues M245–S265 and I278–I298. Positions Y371–L374 match the YXXL motif motif. Positions V399 to V402 match the PDZ-binding motif.

Interacts (YXXL motif) with AP1M1. Interacts (via PDZ-binding motif) with LIN7A. Interacts with unidentified fucose glycoproteins.

It localises to the cytoplasmic vesicle membrane. The enzyme catalyses S-ubiquitinyl-[E2 ubiquitin-conjugating enzyme]-L-cysteine + [acceptor protein]-L-lysine = [E2 ubiquitin-conjugating enzyme]-L-cysteine + N(6)-ubiquitinyl-[acceptor protein]-L-lysine.. The protein operates within protein modification; protein ubiquitination. In terms of biological role, E3 ubiquitin-protein ligase that mediates polyubiquitination of CD4. E3 ubiquitin ligases accept ubiquitin from an E2 ubiquitin-conjugating enzyme in the form of a thioester and then directly transfer the ubiquitin to targeted substrates. May play a role in ubuquitin-dependent protein sorting in developmenting spermatids. The polypeptide is E3 ubiquitin-protein ligase MARCHF11 (Homo sapiens (Human)).